A 192-amino-acid polypeptide reads, in one-letter code: Ion-translocating oxidoreductase complex subunit A (192 aa).

Helical transmembrane passes span 5 to 25, 39 to 59, 65 to 85, 102 to 122, 134 to 154, and 171 to 191; these read LLLLISTVLVNNFVLVKFLGL, IGMSMATTFVLTLASILSYLV, LPFDLSYLRTMSFILVIAVVV, ALGIYLPLITTNCAVLGVALL, AIYGFGAALGFSLVLILFSAM, and AIAMITAGLMSLAFMGFTGLV.

The protein belongs to the NqrDE/RnfAE family. As to quaternary structure, the complex is composed of six subunits: RnfA, RnfB, RnfC, RnfD, RnfE and RnfG.

The protein resides in the cell inner membrane. Its function is as follows. Part of a membrane-bound complex that couples electron transfer with translocation of ions across the membrane. The protein is Ion-translocating oxidoreductase complex subunit A of Shewanella baltica (strain OS185).